Reading from the N-terminus, the 437-residue chain is Eukaryotic peptide chain release factor subunit 1 (437 aa).

Q182 is modified (N5-methylglutamine). K331 is covalently cross-linked (Glycyl lysine isopeptide (Lys-Gly) (interchain with G-Cter in ubiquitin)). S421 carries the post-translational modification Phosphoserine.

This sequence belongs to the eukaryotic release factor 1 family. As to quaternary structure, component of the eRF1-eRF3-GTP ternary complex, composed of SUP45/eRF1, SUP35/eRF3 and GTP. Interacts with TPA1. N5-methylated on Gln-182 by MTQ2.

It localises to the cytoplasm. Component of the eRF1-eRF3-GTP ternary complex, a ternary complex that mediates translation termination in response to the termination codons. The eRF1-eRF3-GTP complex binds to a stop codon in the ribosomal A-site. SUP45/eRF1 is responsible for stop codon recognition and inducing hydrolysis of peptidyl-tRNA. Following GTP hydrolysis by SUP35/eRF3, SUP35/eRF3 dissociates, permitting SUP45/eRF1 to accommodate fully in the A-site and mediate hydrolysis of peptidyl-tRNA. This Saccharomyces cerevisiae (strain ATCC 204508 / S288c) (Baker's yeast) protein is Eukaryotic peptide chain release factor subunit 1 (SUP45).